Reading from the N-terminus, the 860-residue chain is Probable beta-glucosidase A (860 aa).

The N-terminal stretch at 1–19 (MRFTSIEAVALTAVSLASA) is a signal peptide. Residues Asn-61, Asn-211, and Asn-252 are each glycosylated (N-linked (GlcNAc...) asparagine). Asp-280 is an active-site residue. 11 N-linked (GlcNAc...) asparagine glycosylation sites follow: Asn-315, Asn-322, Asn-354, Asn-387, Asn-442, Asn-523, Asn-542, Asn-564, Asn-658, Asn-690, and Asn-712.

Belongs to the glycosyl hydrolase 3 family.

The protein localises to the secreted. It catalyses the reaction Hydrolysis of terminal, non-reducing beta-D-glucosyl residues with release of beta-D-glucose.. It functions in the pathway glycan metabolism; cellulose degradation. In terms of biological role, beta-glucosidases are one of a number of cellulolytic enzymes involved in the degradation of cellulosic biomass. Catalyzes the last step releasing glucose from the inhibitory cellobiose. This is Probable beta-glucosidase A (bglA) from Aspergillus niger (strain ATCC MYA-4892 / CBS 513.88 / FGSC A1513).